Consider the following 382-residue polypeptide: MAQTFLFTSESVGEGHPDKICDQISDAILDACLKDDPFSKVACETASKTGMVMVFGEITTRSQIDYQKVIRNTIKSIGYDDSEKGFDYKTCNVLVAIEQQSPDIAQGLHYEKALEELGAGDQGIMFGYATDETPEKLPLTILLAHKLNAAMSVARRDGSLPWLRPDTKTQVTIEYEEENGAVIPRRVDTIVVSAQHADSISTEDLRSEILEKIIKPTVPAHLLDEKTVYHIQPSGRFVVGGPQGDAGLTGRKIIVDTYGGWGAHGGGAFSGKDYSKVDRSAAYAARWIAKSLVAAGLARRCLVQLSYAIGVAEPLSIFVNTYGTSSKTSAELVEIIRKNFDLRPGVLVKSLKLQTPFYLSTASYGHFTDQSKPWEQPKELKF.

Glu10 serves as a coordination point for Mg(2+). His16 contributes to the ATP binding site. Glu44 provides a ligand contact to K(+). Residues Glu57 and Gln100 each coordinate L-methionine. ATP-binding positions include 166–168, 234–237, Asp245, 251–252, Ala268, Lys272, and Lys276; these read DTK, SGRF, and RK. Residue Asp245 coordinates L-methionine. Position 276 (Lys276) interacts with L-methionine.

The protein belongs to the AdoMet synthase family. Mg(2+) serves as cofactor. It depends on K(+) as a cofactor.

It catalyses the reaction L-methionine + ATP + H2O = S-adenosyl-L-methionine + phosphate + diphosphate. The protein operates within amino-acid biosynthesis; S-adenosyl-L-methionine biosynthesis; S-adenosyl-L-methionine from L-methionine: step 1/1. Catalyzes the formation of S-adenosylmethionine from methionine and ATP. The reaction comprises two steps that are both catalyzed by the same enzyme: formation of S-adenosylmethionine (AdoMet) and triphosphate, and subsequent hydrolysis of the triphosphate. This Schizosaccharomyces pombe (strain 972 / ATCC 24843) (Fission yeast) protein is S-adenosylmethionine synthase (sam1).